A 138-amino-acid polypeptide reads, in one-letter code: uncharacterized protein (138 aa).

Transmembrane regions (helical) follow at residues 8–28, 47–67, and 82–102; these read LIIQISIGLSASLILLFAFLP, FIICFIARLCFSLSAILTIIV, and TLPVLICHGINMLLNLIIAFI.

It to U.parvum UU007, UU008 and UU041.

The protein resides in the cell membrane. This is an uncharacterized protein from Ureaplasma parvum serovar 3 (strain ATCC 700970).